The sequence spans 305 residues: MRHLLTLMEYKPHEVENILRMSRDFKTRYLAGEVYTPIFPGRLVVLYFEKPSTRTRLSLTAAAAQLGMQAVYTTPSELQIGRGETIADTMRVLSRYAVAVAARVYRHETLEEMAQNSSISVINALSDKHHPLQALADALTLWEYVGKLHGIKVAFVGDVSNNVATSLAIIGAKLGWEVRLVGPKQLWNMKLVEELSEDLAKTGGRIYFTDSINDVAGVDGVYTDVWVSMGFEKEAEERRRMLKPYQVNQRVMEIAGRKAIFLHCLPAHRGEEVTDDVIDGPQSVVWDQAENRMHTAKAVFAYLLR.

Residues 52 to 55 (STRT), Gln-79, Arg-103, and 130 to 133 (HPLQ) contribute to the carbamoyl phosphate site. L-ornithine is bound by residues Asn-162, Asp-224, and 228–229 (SM). Carbamoyl phosphate-binding positions include 264-265 (CL) and Arg-292.

The protein belongs to the aspartate/ornithine carbamoyltransferase superfamily. OTCase family.

It localises to the cytoplasm. The catalysed reaction is carbamoyl phosphate + L-ornithine = L-citrulline + phosphate + H(+). It functions in the pathway amino-acid biosynthesis; L-arginine biosynthesis; L-arginine from L-ornithine and carbamoyl phosphate: step 1/3. Its function is as follows. Reversibly catalyzes the transfer of the carbamoyl group from carbamoyl phosphate (CP) to the N(epsilon) atom of ornithine (ORN) to produce L-citrulline. This chain is Ornithine carbamoyltransferase, found in Pyrobaculum islandicum (strain DSM 4184 / JCM 9189 / GEO3).